Reading from the N-terminus, the 283-residue chain is Bifunctional protein FolD (283 aa).

NADP(+) is bound by residues 165–167 (GRS), Ser-190, and Ile-231.

This sequence belongs to the tetrahydrofolate dehydrogenase/cyclohydrolase family. In terms of assembly, homodimer.

It catalyses the reaction (6R)-5,10-methylene-5,6,7,8-tetrahydrofolate + NADP(+) = (6R)-5,10-methenyltetrahydrofolate + NADPH. The enzyme catalyses (6R)-5,10-methenyltetrahydrofolate + H2O = (6R)-10-formyltetrahydrofolate + H(+). Its pathway is one-carbon metabolism; tetrahydrofolate interconversion. Functionally, catalyzes the oxidation of 5,10-methylenetetrahydrofolate to 5,10-methenyltetrahydrofolate and then the hydrolysis of 5,10-methenyltetrahydrofolate to 10-formyltetrahydrofolate. In Janthinobacterium sp. (strain Marseille) (Minibacterium massiliensis), this protein is Bifunctional protein FolD.